The following is a 1035-amino-acid chain: Cell-division control histidine kinase PdhS (1035 aa).

An important for polar localization region spans residues M1 to D613. Residues Q500–E533 are disordered. The interval A614 to D1035 is interaction with DivK. Positions H659 to V730 constitute a PAS domain. A Histidine kinase domain is found at R802 to R1031. Phosphohistidine; by autocatalysis is present on H805.

As to quaternary structure, interacts with DivK.

It is found in the cytoplasm. The enzyme catalyses ATP + protein L-histidine = ADP + protein N-phospho-L-histidine.. In terms of biological role, functions as a polar differentiation marker. Essential protein that, by localizing in the old pole of dividing cells, controls cell division and maturation, probably through control of DivK phosphorylation status and cellular distribution, which in turn regulates CtrA, a transcriptional regulator of the minB operon. The asymmetrical localization of this protein is probably required for cells to enter a new division cycle. The protein is Cell-division control histidine kinase PdhS (pdhS) of Brucella abortus (strain S19).